We begin with the raw amino-acid sequence, 345 residues long: S-adenosylmethionine:tRNA ribosyltransferase-isomerase (345 aa).

It belongs to the QueA family. Monomer.

It localises to the cytoplasm. The enzyme catalyses 7-aminomethyl-7-carbaguanosine(34) in tRNA + S-adenosyl-L-methionine = epoxyqueuosine(34) in tRNA + adenine + L-methionine + 2 H(+). It participates in tRNA modification; tRNA-queuosine biosynthesis. Transfers and isomerizes the ribose moiety from AdoMet to the 7-aminomethyl group of 7-deazaguanine (preQ1-tRNA) to give epoxyqueuosine (oQ-tRNA). In Shewanella sp. (strain W3-18-1), this protein is S-adenosylmethionine:tRNA ribosyltransferase-isomerase.